The following is an 89-amino-acid chain: UPF0297 protein SMU_2079c (89 aa).

This sequence belongs to the UPF0297 family.

In Streptococcus mutans serotype c (strain ATCC 700610 / UA159), this protein is UPF0297 protein SMU_2079c.